The following is a 36-amino-acid chain: Kappa-isophellitoxin-Tst1a (36 aa).

In terms of domain architecture, ShKT spans 2–36 (CENNFSDRECERRKKDCDSSMKFRELSCPKTCGTC). 3 disulfides stabilise this stretch: C2/C36, C11/C29, and C18/C33.

Belongs to the sea anemone type 1 potassium channel toxin family. Type 1a subfamily. As to expression, predominantly expressed in mesenterial filaments (at protein level), a morphological structure that has a functional role in prey killing and digestion. Also expressed in club-tips, tentacles, actinopharynx, body column, mesenterial filaments and pedal disk.

It localises to the secreted. It is found in the nematocyst. Its function is as follows. Probable toxin with unknown function. Does not inhibit all channels tested. Is not cytotoxic on macrophage. The protein is Kappa-isophellitoxin-Tst1a of Telmatactis stephensoni (Sea anemone).